A 1405-amino-acid chain; its full sequence is DNA-directed RNA polymerase subunit beta' (1405 aa).

4 residues coordinate Zn(2+): Cys-70, Cys-72, Cys-85, and Cys-88. The Mg(2+) site is built by Asp-460, Asp-462, and Asp-464. Positions 814, 888, 895, and 898 each coordinate Zn(2+).

Belongs to the RNA polymerase beta' chain family. In terms of assembly, the RNAP catalytic core consists of 2 alpha, 1 beta, 1 beta' and 1 omega subunit. When a sigma factor is associated with the core the holoenzyme is formed, which can initiate transcription. It depends on Mg(2+) as a cofactor. The cofactor is Zn(2+).

The enzyme catalyses RNA(n) + a ribonucleoside 5'-triphosphate = RNA(n+1) + diphosphate. DNA-dependent RNA polymerase catalyzes the transcription of DNA into RNA using the four ribonucleoside triphosphates as substrates. The chain is DNA-directed RNA polymerase subunit beta' from Shewanella sp. (strain MR-7).